The following is a 442-amino-acid chain: Putative pyrimidine permease RutG (442 aa).

Over 1–57 (MAMFGFPHWQLKSTSTESGVVAPDERLPFAQTAVMGVQHAVAMFGATVLMPILMGLD) the chain is Cytoplasmic. The chain crosses the membrane as a helical span at residues 58 to 78 (PNLSILMSGIGTLLFFFITGG). Position 79 (Arg79) is a topological domain, periplasmic. Residues 80–100 (VPSYLGSSAAFVGVVIAATGF) form a helical membrane-spanning segment. The Cytoplasmic portion of the chain corresponds to 101 to 110 (NGQGINPNIS). Residues 111–131 (IALGGIIACGLVYTVIGLVVM) traverse the membrane as a helical segment. Residues 132-140 (KIGTRWIER) lie on the Periplasmic side of the membrane. Residues 141 to 161 (LMPPVVTGAVVMAIGLNLAPI) traverse the membrane as a helical segment. The Cytoplasmic segment spans residues 162-169 (AVKSVSAS). A helical membrane pass occupies residues 170–190 (AFDSWMAVMTVLCIGLVAVFT). Over 191–196 (RGMIQR) the chain is Periplasmic. Residues 197 to 217 (LLILVGLIVACLLYGVMTNVL) traverse the membrane as a helical segment. At 218–240 (GLGKAVDFTLVSHAAWFGLPHFS) the chain is on the cytoplasmic side. Residues 241-261 (TPAFNGQAMMLIAPVAVILVA) traverse the membrane as a helical segment. The Periplasmic portion of the chain corresponds to 262 to 284 (ENLGHLKAVAGMTGRNMDPYMGR). The helical transmembrane segment at 285–305 (AFVGDGLATMLSGSVGGSGVT) threads the bilayer. Topologically, residues 306–318 (TYAENIGVMAVTK) are cytoplasmic. The helical transmembrane segment at 319 to 339 (VYSTLVFVAAAVIAMLLGFSP) threads the bilayer. Residues 340 to 347 (KFGALIHT) lie on the Periplasmic side of the membrane. The chain crosses the membrane as a helical span at residues 348-368 (IPAAVIGGASIVVFGLIAVAG). The Cytoplasmic portion of the chain corresponds to 369–385 (ARIWVQNRVDLSQNGNL). Helical transmembrane passes span 386-406 (IMVA…LGGF) and 407-427 (TLGG…LLSR). At 428-442 (KLVDVPPPEVVHQEP) the chain is on the cytoplasmic side.

Belongs to the nucleobase:cation symporter-2 (NCS2) (TC 2.A.40) family.

It is found in the cell inner membrane. May function as a proton-driven pyrimidine uptake system. The sequence is that of Putative pyrimidine permease RutG (rutG) from Escherichia coli (strain K12).